The sequence spans 134 residues: Parvalbumin-like EF-hand-containing protein (134 aa).

EF-hand domains follow at residues 55-90 (QLDDAIHTAFQSLDKDKSGFIEWNEIKYILSIIPSS) and 96-131 (LTDEEAEAMIQAADTHGDGRINYEEFSELIKKEKIP). Ca(2+)-binding residues include aspartate 68, aspartate 70, serine 72, phenylalanine 74, glutamate 76, glutamate 79, aspartate 109, aspartate 113, and glutamate 120.

This sequence belongs to the parvalbumin family.

The polypeptide is Parvalbumin-like EF-hand-containing protein (Homo sapiens (Human)).